The chain runs to 312 residues: Malate dehydrogenase (312 aa).

Residues 12–17 and Asp36 each bind NAD(+); that span reads GAGFTG. Residues Arg87 and Arg93 each coordinate substrate. NAD(+) contacts are provided by residues Asn100 and 123–125; that span reads LTN. Asn125 lines the substrate pocket. Ser149 is modified (phosphoserine). Arg156 contacts substrate. His180 acts as the Proton acceptor in catalysis.

Belongs to the LDH/MDH superfamily. MDH type 3 family.

It catalyses the reaction (S)-malate + NAD(+) = oxaloacetate + NADH + H(+). Its function is as follows. Catalyzes the reversible oxidation of malate to oxaloacetate. The polypeptide is Malate dehydrogenase (Bacillus cereus (strain ZK / E33L)).